A 74-amino-acid chain; its full sequence is M-myrmeciitoxin-Mb1a (74 aa).

The signal sequence occupies residues 1 to 26; that stretch reads MKLSCLLLTLAIIVVLTIVHAPNVEA. Positions 27-50 are excised as a propeptide; it reads KALADPESDAVGFADAVGEADPNA. A Glutamine amide modification is found at glutamine 73.

The protein belongs to the formicidae venom precursor-01 superfamily. Ant pilosulin family. As to expression, expressed by the venom gland.

It is found in the secreted. Its function is as follows. Shows moderate activity against E.coli and S.aureus (MIC&lt;25 uM), slight activity against B.subtilis (MIC&lt;50 uM), and no activity against L.garvieae, P.aeruginosa, C.albicans, and S.cerevisiae. Has no hemolytic nor cytolytic activity. Causes an IgE-independent histamine release. This is M-myrmeciitoxin-Mb1a from Myrmecia banksi (Jack jumper ant).